A 135-amino-acid polypeptide reads, in one-letter code: Holo-[acyl-carrier-protein] synthase (135 aa).

Positions 8 and 58 each coordinate Mg(2+).

It belongs to the P-Pant transferase superfamily. AcpS family. Requires Mg(2+) as cofactor.

The protein resides in the cytoplasm. It catalyses the reaction apo-[ACP] + CoA = holo-[ACP] + adenosine 3',5'-bisphosphate + H(+). Functionally, transfers the 4'-phosphopantetheine moiety from coenzyme A to a Ser of acyl-carrier-protein. In Ligilactobacillus salivarius (strain UCC118) (Lactobacillus salivarius), this protein is Holo-[acyl-carrier-protein] synthase.